The primary structure comprises 52 residues: Ornatin-B (52 aa).

Positions 42-44 (RGD) match the Cell attachment site motif.

This sequence belongs to the ornatin family.

It localises to the secreted. Its function is as follows. Potent inhibitor of fibrinogen interaction with platelet receptors expressed on glycoprotein IIb-IIIa complex. May prevent blood from clotting during either feeding and/or storage of ingested blood. This Placobdella ornata (Turtle leech) protein is Ornatin-B.